A 452-amino-acid chain; its full sequence is Sodium-coupled neutral amino acid transporter 7 (452 aa).

Transmembrane regions (helical) follow at residues 46 to 66 (AVFI…PAAF), 74 to 94 (AAIS…VILA), 120 to 140 (LCEV…FIII), 168 to 188 (FTIS…REIS), 195 to 215 (FLSV…CIWP), 234 to 256 (VFNA…PVYG), 272 to 292 (IAMF…FLLF), 309 to 329 (IAVA…YPIL), 361 to 381 (VLQT…IPDI), 385 to 405 (ISLI…LCLI), and 419 to 439 (SWWA…FIFG).

This sequence belongs to the amino acid/polyamine transporter 2 family.

Its subcellular location is the lysosome membrane. It localises to the cell projection. The protein resides in the axon. The catalysed reaction is L-asparagine(in) + Na(+)(in) = L-asparagine(out) + Na(+)(out). The enzyme catalyses L-glutamine(in) + Na(+)(in) = L-glutamine(out) + Na(+)(out). Its function is as follows. Symporter that selectively cotransports sodium ions and amino acids, such as L-glutamine and L-asparagine from the lysosome into the cytoplasm and may participates in mTORC1 activation. The transport activity requires an acidic lysosomal lumen. The polypeptide is Sodium-coupled neutral amino acid transporter 7 (Xenopus laevis (African clawed frog)).